The sequence spans 489 residues: Betaine aldehyde dehydrogenase (489 aa).

Residue N93 participates in K(+) binding. Residue 150 to 152 participates in NAD(+) binding; that stretch reads GAW. The Charge relay system role is filled by K162. 176–179 serves as a coordination point for NAD(+); the sequence is KPSE. K(+) is bound at residue V180. Residue 229 to 232 participates in NAD(+) binding; that stretch reads EVGT. K(+) is bound at residue L245. The active-site Proton acceptor is E251. 3 residues coordinate NAD(+): G253, C285, and E386. C285 serves as the catalytic Nucleophile. Cysteine sulfenic acid (-SOH) is present on C285. K456 and G459 together coordinate K(+). E463 serves as the catalytic Charge relay system.

It belongs to the aldehyde dehydrogenase family. In terms of assembly, dimer of dimers. It depends on K(+) as a cofactor.

It carries out the reaction betaine aldehyde + NAD(+) + H2O = glycine betaine + NADH + 2 H(+). Its pathway is amine and polyamine biosynthesis; betaine biosynthesis via choline pathway; betaine from betaine aldehyde: step 1/1. Functionally, involved in the biosynthesis of the osmoprotectant glycine betaine. Catalyzes the irreversible oxidation of betaine aldehyde to the corresponding acid. The sequence is that of Betaine aldehyde dehydrogenase from Chromohalobacter salexigens (strain ATCC BAA-138 / DSM 3043 / CIP 106854 / NCIMB 13768 / 1H11).